Here is a 1091-residue protein sequence, read N- to C-terminus: Voltage-dependent calcium channel subunit alpha-2/delta-3 (1091 aa).

Positions 1–28 are cleaved as a signal peptide; that stretch reads MAGPGSPRRASRGASALLAAALLYAALG. Residues 29–1068 lie on the Extracellular side of the membrane; sequence DVVRSEQQIP…HPEENARECG (1040 aa). Asn166 carries an N-linked (GlcNAc...) asparagine glycan. Residues 256 to 438 form the VWFA domain; that stretch reads DVVILVDVSG…ENVMEYLHVL (183 aa). The a divalent metal cation site is built by Asp262, Ser264, and Ser266. An MIDAS-like motif motif is present at residues 262–266; that stretch reads DVSGS. Asn309 carries N-linked (GlcNAc...) asparagine glycosylation. The cysteines at positions 412 and 1055 are disulfide-linked. A Cache domain is found at 452–549; the sequence is WTEAYIDSTL…RLLYEEGKKR (98 aa). Residues Asn553, Asn632, and Asn793 are each glycosylated (N-linked (GlcNAc...) asparagine). Phosphotyrosine is present on Tyr924. Residues 1069-1089 traverse the membrane as a helical segment; the sequence is GAPSLQAQTVLLLLPLLLMLF. Topologically, residues 1090–1091 are cytoplasmic; it reads SR.

This sequence belongs to the calcium channel subunit alpha-2/delta family. Dimer formed of alpha-2-2 and delta-2 chains; disulfide-linked. Voltage-dependent calcium channels are multisubunit complexes, consisting of alpha-1 (CACNA1), alpha-2 (CACNA2D), beta (CACNB) and delta (CACNA2D) subunits in a 1:1:1:1 ratio. N-glycosylated. Post-translationally, may be proteolytically processed into subunits alpha-2-3 and delta-3 that are disulfide-linked. It is however unclear whether such cleavage really takes place in vivo and has a functional role. Only detected in brain. Not present in lung, testis, aorta, spleen, jejunum, ventricular muscle and kidney (at protein level). According to PubMed:11687876, it is brain-specific, while according to PubMed:11245980, it is widely expressed.

It localises to the membrane. Its function is as follows. The alpha-2/delta subunit of voltage-dependent calcium channels regulates calcium current density and activation/inactivation kinetics of the calcium channel. Acts as a regulatory subunit for P/Q-type calcium channel (CACNA1A), N-type (CACNA1B), L-type (CACNA1C OR CACNA1D) but not T-type (CACNA1G). The protein is Voltage-dependent calcium channel subunit alpha-2/delta-3 (CACNA2D3) of Homo sapiens (Human).